We begin with the raw amino-acid sequence, 945 residues long: Valine--tRNA ligase (945 aa).

The 'HIGH' region signature appears at 42 to 52; that stretch reads PNVTGTLHMGH. The 'KMSKS' region motif lies at 552–556; the sequence is KMSKS. K555 lines the ATP pocket. Residues 879 to 945 adopt a coiled-coil conformation; the sequence is DKAAETARLS…VQNQLAKLKD (67 aa).

The protein belongs to the class-I aminoacyl-tRNA synthetase family. ValS type 1 subfamily. Monomer.

It is found in the cytoplasm. It carries out the reaction tRNA(Val) + L-valine + ATP = L-valyl-tRNA(Val) + AMP + diphosphate. Functionally, catalyzes the attachment of valine to tRNA(Val). As ValRS can inadvertently accommodate and process structurally similar amino acids such as threonine, to avoid such errors, it has a 'posttransfer' editing activity that hydrolyzes mischarged Thr-tRNA(Val) in a tRNA-dependent manner. The chain is Valine--tRNA ligase from Neisseria gonorrhoeae (strain ATCC 700825 / FA 1090).